The chain runs to 166 residues: Anaerobic nitrite reductase NSHB1 (166 aa).

The 151-residue stretch at 13-163 (SFSEEQEALV…LVAAIKQEMK (151 aa)) folds into the Globin domain. The Homodimerization motif lies at 46–50 (EVAPS). Residues Ser-56, Lys-70, His-74, Arg-104, Thr-108, and His-109 each coordinate heme b. Residues 116–128 (DAHFEVVKFALLD) carry the Homodimerization motif.

This sequence belongs to the plant globin family. Homodimer. Heme b is required as a cofactor. Expressed in coleoptiles, embryos, leaves, seminal roots and roots.

It is found in the cytoplasm. The protein localises to the nucleus. The catalysed reaction is Fe(III)-heme b-[protein] + nitric oxide + H2O = Fe(II)-heme b-[protein] + nitrite + 2 H(+). With respect to regulation, slowly reduced by ascorbic acid (AA); this reaction may become a source of nitric oxide (NO) during hypoxia. Its function is as follows. Phytoglobin that reduces nitrite to nitric oxide under anoxic conditions (e.g. during flooding or in waterlogged soil). May not function as an oxygen storage or transport protein. Has an unusually high affinity for O(2) through a hexacoordinate heme iron because of a very low dissociation constant. This Oryza sativa subsp. japonica (Rice) protein is Anaerobic nitrite reductase NSHB1.